A 371-amino-acid chain; its full sequence is GDP-mannose 3,5-epimerase 2 (371 aa).

Residues 29–55, D53, and D73 each bind NAD(+); that span reads GAGGFIASHIARRLKSEGHYIIASDWK. Residues G98 and 138–140 each bind substrate; that span reads SAC. Residues Y168 and K172 each contribute to the NAD(+) site. Residue Y168 is the Proton acceptor of the active site. Substrate is bound by residues N197, 210–212, K219, 235–237, R300, and S350; these read EKA and QTR.

The protein belongs to the NAD(P)-dependent epimerase/dehydratase family. NAD(+) is required as a cofactor.

It catalyses the reaction GDP-alpha-D-mannose = GDP-beta-L-gulose. It carries out the reaction GDP-beta-L-gulose = GDP-beta-L-galactose. It participates in cofactor biosynthesis; L-ascorbate biosynthesis via GDP-alpha-D-mannose pathway; L-ascorbate from GDP-alpha-D-mannose: step 1/5. Functionally, catalyzes a reversible epimerization of GDP-D-mannose that precedes the committed step in the biosynthesis of vitamin C (L-ascorbate), resulting in the hydrolysis of the highly energetic glycosyl-pyrophosphoryl linkage. Able to catalyze 2 distinct epimerization reactions and can release both GDP-L-galactose and GDP-L-gulose from GDP-mannose. The polypeptide is GDP-mannose 3,5-epimerase 2 (GME-2) (Oryza sativa subsp. japonica (Rice)).